A 510-amino-acid polypeptide reads, in one-letter code: Glycerol kinase (510 aa).

Residue T13 participates in ADP binding. ATP contacts are provided by T13 and T14. T13 is a binding site for sn-glycerol 3-phosphate. R17 contributes to the ADP binding site. Residues R83, E84, Y135, and D255 each coordinate sn-glycerol 3-phosphate. Positions 83, 84, 135, 255, and 256 each coordinate glycerol. ADP contacts are provided by T277, G321, G421, and N425. Positions 277, 321, and 421 each coordinate ATP.

This sequence belongs to the FGGY kinase family.

The catalysed reaction is glycerol + ATP = sn-glycerol 3-phosphate + ADP + H(+). The protein operates within polyol metabolism; glycerol degradation via glycerol kinase pathway; sn-glycerol 3-phosphate from glycerol: step 1/1. In terms of biological role, key enzyme in the regulation of glycerol uptake and metabolism. Catalyzes the phosphorylation of glycerol to yield sn-glycerol 3-phosphate. This chain is Glycerol kinase, found in Haloarcula marismortui (strain ATCC 43049 / DSM 3752 / JCM 8966 / VKM B-1809) (Halobacterium marismortui).